The primary structure comprises 75 residues: Small integral membrane protein 7 (75 aa).

Residues 1–17 (MIGDILLFGTLLMNAGA) form the signal peptide. Over 18 to 53 (VLNFKLKKKDTQGFGEESREPSTGDNIREFLLSLRY) the chain is Extracellular. A helical transmembrane segment spans residues 54 to 74 (FRIFIALWNIFMMFCMIVLFG). A topological domain (cytoplasmic) is located at residue serine 75.

Belongs to the SMIM7 family.

It is found in the membrane. This is Small integral membrane protein 7 (SMIM7) from Homo sapiens (Human).